Here is a 238-residue protein sequence, read N- to C-terminus: Ubiquinone biosynthesis O-methyltransferase (238 aa).

Residues R39, G59, D80, and M124 each coordinate S-adenosyl-L-methionine.

Belongs to the methyltransferase superfamily. UbiG/COQ3 family.

It catalyses the reaction a 3-demethylubiquinol + S-adenosyl-L-methionine = a ubiquinol + S-adenosyl-L-homocysteine + H(+). It carries out the reaction a 3-(all-trans-polyprenyl)benzene-1,2-diol + S-adenosyl-L-methionine = a 2-methoxy-6-(all-trans-polyprenyl)phenol + S-adenosyl-L-homocysteine + H(+). Its pathway is cofactor biosynthesis; ubiquinone biosynthesis. In terms of biological role, O-methyltransferase that catalyzes the 2 O-methylation steps in the ubiquinone biosynthetic pathway. This chain is Ubiquinone biosynthesis O-methyltransferase, found in Aeromonas salmonicida (strain A449).